We begin with the raw amino-acid sequence, 116 residues long: Large ribosomal subunit protein bL20 (116 aa).

This sequence belongs to the bacterial ribosomal protein bL20 family.

Functionally, binds directly to 23S ribosomal RNA and is necessary for the in vitro assembly process of the 50S ribosomal subunit. It is not involved in the protein synthesizing functions of that subunit. The sequence is that of Large ribosomal subunit protein bL20 from Desulfosudis oleivorans (strain DSM 6200 / JCM 39069 / Hxd3) (Desulfococcus oleovorans).